We begin with the raw amino-acid sequence, 463 residues long: MVHSSMGAPEIRMSKPLEAEKQSLDSPSEHTDTERNGPDINHQNPQNKASPFSVSPTGPSTKIKAEDPSGDSAPAAPPPPQPAQPHLPQAQLMLTGSQLAGDIQQLLQLQQLVLVPGHHLQPPAQFLLPQAQQSQPGLLPTPNLFQLPQQTQGALLTSQPRAGLPTQPPKCLEPPSHPEEPSDLEELEQFARTFKQRRIKLGFTQGDVGLAMGKLYGNDFSQTTISRFEALNLSFKNMCKLKPLLEKWLNDAETMSVDSSLPSPNQLSSPSLGFDGLPGRRRKKRTSIETNVRFALEKSFLANQKPTSEEILLIAEQLHMEKEVIRVWFCNRRQKEKRINPCSAAPMLPSPGKPTSYSPHLVTPQGGAGTLPLSQASSSLSTTVTTLSSAVGTLHPSRTAGGGGGGGGAAPPLNSIPSVTPPPPATTNSTNPSPQGSHSAIGLSGLNPSAGPGLWWNPAPYQP.

Disordered stretches follow at residues 1–87 (MVHS…QPHL), 159–182 (QPRAGLPTQPPKCLEPPSHPEEPS), 259–282 (SSLPSPNQLSSPSLGFDGLPGRRR), 341–376 (PCSAAPMLPSPGKPTSYSPHLVTPQGGAGTLPLSQA), and 393–463 (TLHP…PYQP). Positions 12–37 (RMSKPLEAEKQSLDSPSEHTDTERNG) are enriched in basic and acidic residues. The segment covering 41 to 60 (NHQNPQNKASPFSVSPTGPS) has biased composition (polar residues). Over residues 75–85 (AAPPPPQPAQP) the composition is skewed to pro residues. The POU-specific domain maps to 179–253 (EEPSDLEELE…LLEKWLNDAE (75 aa)). The span at 259 to 272 (SSLPSPNQLSSPSL) shows a compositional bias: low complexity. A DNA-binding region (homeobox) is located at residues 281–340 (RRKKRTSIETNVRFALEKSFLANQKPTSEEILLIAEQLHMEKEVIRVWFCNRRQKEKRIN). Residues 373-394 (LSQASSSLSTTVTTLSSAVGTL) are leucine-zipper. The segment covering 400–409 (AGGGGGGGGA) has biased composition (gly residues).

Belongs to the POU transcription factor family. Class-2 subfamily. In terms of assembly, interacts with NR3C1, AR and PGR. Interacts with POU2AF1; the interaction increases POU2F2 transactivation activity. As to expression, highest in B cells, but also present in brain (neuronal and glial cells), intestine, kidney, and testes. In terms of tissue distribution, expressed at higher levels in B-cells than in neuronal cells. Expressed in neuronal cell lines and brain, but not dorsal root ganglia. As to expression, expressed at lower levels in neuronal cells than in B cells. In terms of tissue distribution, expressed in neuronal cell lines, and at lower levels in neuroblastoma and dorsal root ganglia. Widely expressed in the developing nervous system but expression is confined to very specific regions in the adult brain, it is expressed at a lower level in B cells. As to expression, either absent in, or expressed at very low levels in neuronal cells and brain. In terms of tissue distribution, expressed in all tissues tested: mammary gland, liver, spleen, lung, kidney intestine, uterus and ovary of a virgin mouse. Levels of isoform OCT2.7 are highest in spleen and lung. In mammary gland, expression is localized to the alveolus epithelial cells.

The protein localises to the cytoplasm. It localises to the nucleus. Transactivation activity is enhanced by transcriptional coactivator POU2AF1. Functionally, transcription factor that specifically binds to the octamer motif (5'-ATTTGCAT-3'). Regulates IL6 expression in B cells with POU2AF1. Regulates transcription in a number of tissues in addition to activating immunoglobulin gene expression. Modulates transcription transactivation by NR3C1, AR and PGR. Its function is as follows. Activates octamer-containing promoters. In terms of biological role, represses some promoters and activate others. Represses some promoters and activate others. Activates the U2 small nuclear RNA (snRNA) promoter. Functionally, unable to bind to the octamer motif, but can still activate the beta-casein gene promoter at low levels. The protein is POU domain, class 2, transcription factor 2 of Mus musculus (Mouse).